The sequence spans 349 residues: Homoserine O-succinyltransferase (349 aa).

C146 acts as the Acyl-thioester intermediate in catalysis. Substrate contacts are provided by K167 and S196. Residue H239 is the Proton acceptor of the active site. E241 is a catalytic residue. R253 provides a ligand contact to substrate.

The protein belongs to the MetA family.

The protein localises to the cytoplasm. It carries out the reaction L-homoserine + succinyl-CoA = O-succinyl-L-homoserine + CoA. It functions in the pathway amino-acid biosynthesis; L-methionine biosynthesis via de novo pathway; O-succinyl-L-homoserine from L-homoserine: step 1/1. In terms of biological role, transfers a succinyl group from succinyl-CoA to L-homoserine, forming succinyl-L-homoserine. In vitro, can also use glutaryl-CoA as acyl donor. This Thiobacillus denitrificans (strain ATCC 25259 / T1) protein is Homoserine O-succinyltransferase.